A 290-amino-acid chain; its full sequence is MDKIIKSISETGSFRAFVLDSTQTVKTAQEKHQTLSSSTVALGRTLIANQILAANQKGDSKITVKVIGDSSFGHIISVADTKGHVKGYIQNTGVDIKKTATGEVLVGPFMGNGHFVTIIDYGTGNPYTSTTPLITGEIGEDFAYYLTESEQTPSAVGLNVLLDEEDKVKVAGGFMVQALPGASEEEIARYEKRLQEMPAISTLLAAEDPSDALLSAIYGDEGYKRLSEDSLSFQCDCSKDRFESALMSLPNTDLQDMIDQDHGAEIICQFCQTRYQFSEDDLKGIINDKA.

Disulfide bonds link cysteine 235–cysteine 237 and cysteine 268–cysteine 271.

This sequence belongs to the HSP33 family. Post-translationally, under oxidizing conditions two disulfide bonds are formed involving the reactive cysteines. Under reducing conditions zinc is bound to the reactive cysteines and the protein is inactive.

The protein resides in the cytoplasm. In terms of biological role, redox regulated molecular chaperone. Protects both thermally unfolding and oxidatively damaged proteins from irreversible aggregation. Plays an important role in the bacterial defense system toward oxidative stress. The sequence is that of 33 kDa chaperonin from Streptococcus uberis (strain ATCC BAA-854 / 0140J).